The chain runs to 80 residues: SPbeta prophage-derived uncharacterized HTH-type transcriptional regulator YotL (80 aa).

One can recognise an HTH cro/C1-type domain in the interval 12–67 (LNELMHEYSVSIEDLVECTGLSKQRINDYVGGFKSNMNIGTAMTFADAIGCSIEEL). Positions 23-42 (IEDLVECTGLSKQRINDYVG) form a DNA-binding region, H-T-H motif.

The chain is SPbeta prophage-derived uncharacterized HTH-type transcriptional regulator YotL (yotL) from Bacillus subtilis (strain 168).